A 367-amino-acid chain; its full sequence is C-C chemokine receptor type 6 (367 aa).

Over Met1 to Val39 the chain is Extracellular. Residues Asn2 and Asn35 are each glycosylated (N-linked (GlcNAc...) asparagine). A helical transmembrane segment spans residues Phe40–Tyr66. Residues Lys67–Val75 are Cytoplasmic-facing. The chain crosses the membrane as a helical span at residues Tyr76–Val96. The Extracellular portion of the chain corresponds to Thr97–Lys111. A disulfide bridge connects residues Cys110 and Cys189. A helical membrane pass occupies residues Leu112–Met133. The Cytoplasmic segment spans residues Asp134–Arg151. A helical membrane pass occupies residues Thr152–Ser172. Over Pro173 to Lys203 the chain is Extracellular. A helical membrane pass occupies residues Leu204–Ile230. Over Lys231–Arg246 the chain is Cytoplasmic. The chain crosses the membrane as a helical span at residues Val247–Val271. Over Asn272 to Val295 the chain is Extracellular. Residues Leu296 to Gln313 traverse the membrane as a helical segment. Residues Lys314–Met367 lie on the Cytoplasmic side of the membrane.

Belongs to the G-protein coupled receptor 1 family. As to expression, sperm. Mainly localized in the principal piece and neck region of the tail but is also found in the acrosomal region in a small percentage of sperm cells. Expressed in natural regulatory T cells (nTregs) and a subset of early thymocyte progenitor double-negative 1 (DN1) cells. Expressed in memory B cells. Expressed by IL17 producing helper T-cells (Th17), type 1 effector cells (Th1), type 2 effector cells (Th2) and regulatory T-cells (Treg) (at protein level). Expressed by Th17 cells in spleen, Peyers patches, and lamina propria of small and large intestine. Highly expressed in testis, lung, colon, and dendritic cells.

The protein resides in the cell membrane. The protein localises to the cell surface. Functionally, receptor for the C-C type chemokine CCL20. Binds to CCL20 and subsequently transduces a signal by increasing the intracellular calcium ion levels. Although CCL20 is its major ligand it can also act as a receptor for non-chemokine ligands such as beta-defensins. Binds to defensin DEFB1 leading to increase in intracellular calcium ions and cAMP levels. Its binding to DEFB1 is essential for the function of DEFB1 in regulating sperm motility and bactericidal activity. Binds to defensins DEFB4 and DEFB4A/B and mediates their chemotactic effects. The ligand-receptor pair CCL20-CCR6 is responsible for the chemotaxis of dendritic cells (DC), effector/memory T-cells and B-cells and plays an important role at skin and mucosal surfaces under homeostatic and inflammatory conditions, as well as in pathology, including cancer and various autoimmune diseases. CCR6-mediated signals are essential for immune responses to microbes in the intestinal mucosa and in the modulation of inflammatory responses initiated by tissue insult and trauma. CCR6 is essential for the recruitment of both the pro-inflammatory IL17 producing helper T-cells (Th17) and the regulatory T-cells (Treg) to sites of inflammation. Required for the normal migration of Th17 cells in Peyers patches and other related tissue sites of the intestine and plays a role in regulating effector T-cell balance and distribution in inflamed intestine. Plays an important role in the coordination of early thymocyte precursor migration events important for normal subsequent thymocyte precursor development, but is not required for the formation of normal thymic natural regulatory T-cells (nTregs). Required for optimal differentiation of DN2 and DN3 thymocyte precursors. Essential for B-cell localization in the subepithelial dome of Peyers-patches and for efficient B-cell isotype switching to IgA in the Peyers-patches. Essential for appropriate anatomical distribution of memory B-cells in the spleen and for the secondary recall response of memory B-cells. Positively regulates sperm motility and chemotaxis via its binding to CCL20. This Mus musculus (Mouse) protein is C-C chemokine receptor type 6 (Ccr6).